We begin with the raw amino-acid sequence, 104 residues long: uncharacterized protein (104 aa).

The tract at residues 1–24 is disordered; that stretch reads MISTEKSSDAVAMHCPSGDQHNSE.

This is an uncharacterized protein from Saccharomyces cerevisiae (strain ATCC 204508 / S288c) (Baker's yeast).